We begin with the raw amino-acid sequence, 134 residues long: D-xylulose reductase (134 aa).

Residues 31–115 (PATTTXYKXQ…XXQXDKIGRY (85 aa)) form a disordered region. A compositionally biased stretch (basic and acidic residues) spans 50–59 (QTHEGTHQDV).

This sequence belongs to the zinc-containing alcohol dehydrogenase family.

It carries out the reaction xylitol + NAD(+) = D-xylulose + NADH + H(+). With respect to regulation, activated by calcium and inhibited by zinc. The protein is D-xylulose reductase of Sus scrofa (Pig).